The chain runs to 170 residues: Peptide deformylase (170 aa).

2 residues coordinate Fe cation: Cys91 and His133. Glu134 is an active-site residue. His137 contributes to the Fe cation binding site.

The protein belongs to the polypeptide deformylase family. Fe(2+) serves as cofactor.

The enzyme catalyses N-terminal N-formyl-L-methionyl-[peptide] + H2O = N-terminal L-methionyl-[peptide] + formate. Removes the formyl group from the N-terminal Met of newly synthesized proteins. Requires at least a dipeptide for an efficient rate of reaction. N-terminal L-methionine is a prerequisite for activity but the enzyme has broad specificity at other positions. The sequence is that of Peptide deformylase from Yersinia pseudotuberculosis serotype O:1b (strain IP 31758).